A 289-amino-acid chain; its full sequence is Acetyl-coenzyme A carboxylase carboxyl transferase subunit beta (289 aa).

The CoA carboxyltransferase N-terminal domain maps to 28-289 (VMTKCPKCKK…QGGGMAVWQS (262 aa)). 4 residues coordinate Zn(2+): Cys-32, Cys-35, Cys-51, and Cys-54. Residues 32–54 (CPKCKKIMYTKELLKNLKVCVNC) form a C4-type zinc finger.

Belongs to the AccD/PCCB family. Acetyl-CoA carboxylase is a heterohexamer composed of biotin carboxyl carrier protein (AccB), biotin carboxylase (AccC) and two subunits each of ACCase subunit alpha (AccA) and ACCase subunit beta (AccD). Zn(2+) is required as a cofactor.

The protein localises to the cytoplasm. The catalysed reaction is N(6)-carboxybiotinyl-L-lysyl-[protein] + acetyl-CoA = N(6)-biotinyl-L-lysyl-[protein] + malonyl-CoA. It functions in the pathway lipid metabolism; malonyl-CoA biosynthesis; malonyl-CoA from acetyl-CoA: step 1/1. Its function is as follows. Component of the acetyl coenzyme A carboxylase (ACC) complex. Biotin carboxylase (BC) catalyzes the carboxylation of biotin on its carrier protein (BCCP) and then the CO(2) group is transferred by the transcarboxylase to acetyl-CoA to form malonyl-CoA. The chain is Acetyl-coenzyme A carboxylase carboxyl transferase subunit beta from Bacillus mycoides (strain KBAB4) (Bacillus weihenstephanensis).